The following is a 416-amino-acid chain: GTPase Obg (416 aa).

One can recognise an Obg domain in the interval 1-157; sequence MFQDVLVITV…RRLRLELMLI (157 aa). Disordered stretches follow at residues 25–44 and 62–82; these read EKFV…GGSV and TYKA…RGGE. A compositionally biased stretch (gly residues) spans 32 to 42; it reads GPDGGDGGRGG. Residues 63–72 are compositionally biased toward basic and acidic residues; sequence YKAEDGEHGR. One can recognise an OBG-type G domain in the interval 158 to 324; sequence ADVGLVGYPN…LKEALHALVR (167 aa). GTP-binding positions include 164–171, 189–193, 211–214, 277–280, and 305–307; these read GYPNAGKS, FTTLS, DIPG, NKVD, and SAL. 2 residues coordinate Mg(2+): Ser171 and Thr191. Residues 336–414 enclose the OCT domain; the sequence is PRKEVQAGVE…IGGLEFEYIP (79 aa).

It belongs to the TRAFAC class OBG-HflX-like GTPase superfamily. OBG GTPase family. As to quaternary structure, monomer. Mg(2+) is required as a cofactor.

It localises to the cytoplasm. An essential GTPase which binds GTP, GDP and possibly (p)ppGpp with moderate affinity, with high nucleotide exchange rates and a fairly low GTP hydrolysis rate. Plays a role in control of the cell cycle, stress response, ribosome biogenesis and in those bacteria that undergo differentiation, in morphogenesis control. The polypeptide is GTPase Obg (Thermus thermophilus (strain ATCC 27634 / DSM 579 / HB8)).